Reading from the N-terminus, the 929-residue chain is Isoleucine--tRNA ligase (929 aa).

Positions 58–68 match the 'HIGH' region motif; sequence PYANGDIHIGH. An L-isoleucyl-5'-AMP-binding site is contributed by E563. Positions 605–609 match the 'KMSKS' region motif; the sequence is KMSKS. K608 serves as a coordination point for ATP. Zn(2+) contacts are provided by C892, C895, C912, and C915.

This sequence belongs to the class-I aminoacyl-tRNA synthetase family. IleS type 1 subfamily. Monomer. It depends on Zn(2+) as a cofactor.

The protein resides in the cytoplasm. The catalysed reaction is tRNA(Ile) + L-isoleucine + ATP = L-isoleucyl-tRNA(Ile) + AMP + diphosphate. Functionally, catalyzes the attachment of isoleucine to tRNA(Ile). As IleRS can inadvertently accommodate and process structurally similar amino acids such as valine, to avoid such errors it has two additional distinct tRNA(Ile)-dependent editing activities. One activity is designated as 'pretransfer' editing and involves the hydrolysis of activated Val-AMP. The other activity is designated 'posttransfer' editing and involves deacylation of mischarged Val-tRNA(Ile). The polypeptide is Isoleucine--tRNA ligase (Neisseria meningitidis serogroup C (strain 053442)).